Here is a 1916-residue protein sequence, read N- to C-terminus: Diacylglycerol kinase eta (1916 aa).

Residues 1–36 (MAHIKLDTLDVVQRPGTTRRSNSNSGRSSACSSGSL) are disordered. Residues 19-36 (RRSNSNSGRSSACSSGSL) are compositionally biased toward low complexity. Residues 82 to 175 (AIIKEGFLLK…WLGSLKTATT (94 aa)) form the PH domain. Phorbol-ester/DAG-type zinc fingers lie at residues 195 to 245 (HHHW…IANC) and 268 to 319 (PHQW…AVAC). One can recognise a DAGKc domain in the interval 350–486 (GNFSPLLVFV…DRWSIMVFEK (137 aa)). Basic and acidic residues predominate over residues 623-644 (DEINTKERRSSRSLRSSEKEAL). 4 disordered regions span residues 623–648 (DEIN…QSRA), 846–874 (DRGK…KEDN), 1018–1067 (TLCS…DDNP), and 1183–1214 (TSTS…SVKP). In terms of domain architecture, SAM spans 1853 to 1916 (WSVNEVVTWL…LQAIKDLSEN (64 aa)).

The protein belongs to the eukaryotic diacylglycerol kinase family.

It is found in the cytoplasm. It carries out the reaction a 1,2-diacyl-sn-glycerol + ATP = a 1,2-diacyl-sn-glycero-3-phosphate + ADP + H(+). Its function is as follows. Phosphorylates diacylglycerol (DAG) to generate phosphatidic acid (PA). The polypeptide is Diacylglycerol kinase eta (Drosophila ananassae (Fruit fly)).